The sequence spans 296 residues: Ribosomal RNA small subunit methyltransferase A (296 aa).

Asn-32, Leu-34, Gly-59, Glu-80, Asp-105, and Asn-130 together coordinate S-adenosyl-L-methionine.

The protein belongs to the class I-like SAM-binding methyltransferase superfamily. rRNA adenine N(6)-methyltransferase family. RsmA subfamily.

The protein resides in the cytoplasm. It catalyses the reaction adenosine(1518)/adenosine(1519) in 16S rRNA + 4 S-adenosyl-L-methionine = N(6)-dimethyladenosine(1518)/N(6)-dimethyladenosine(1519) in 16S rRNA + 4 S-adenosyl-L-homocysteine + 4 H(+). Functionally, specifically dimethylates two adjacent adenosines (A1518 and A1519) in the loop of a conserved hairpin near the 3'-end of 16S rRNA in the 30S particle. May play a critical role in biogenesis of 30S subunits. The chain is Ribosomal RNA small subunit methyltransferase A from Ligilactobacillus salivarius (strain UCC118) (Lactobacillus salivarius).